Here is a 418-residue protein sequence, read N- to C-terminus: Light-independent protochlorophyllide reductase subunit N (418 aa).

[4Fe-4S] cluster contacts are provided by cysteine 17, cysteine 42, and cysteine 103.

This sequence belongs to the BchN/ChlN family. Protochlorophyllide reductase is composed of three subunits; ChlL, ChlN and ChlB. Forms a heterotetramer of two ChlB and two ChlN subunits. The cofactor is [4Fe-4S] cluster.

The catalysed reaction is chlorophyllide a + oxidized 2[4Fe-4S]-[ferredoxin] + 2 ADP + 2 phosphate = protochlorophyllide a + reduced 2[4Fe-4S]-[ferredoxin] + 2 ATP + 2 H2O. The protein operates within porphyrin-containing compound metabolism; chlorophyll biosynthesis (light-independent). Component of the dark-operative protochlorophyllide reductase (DPOR) that uses Mg-ATP and reduced ferredoxin to reduce ring D of protochlorophyllide (Pchlide) to form chlorophyllide a (Chlide). This reaction is light-independent. The NB-protein (ChlN-ChlB) is the catalytic component of the complex. This chain is Light-independent protochlorophyllide reductase subunit N, found in Prochlorococcus marinus (strain NATL2A).